The following is a 200-amino-acid chain: MAIDKLPLLLFLSILLCLNRPVLSDTDEEDILLTGINSYRTTQNLTILSKNENAECLADEIADQFKNKPCTNDTGSATVPGTEPQFANYPQILAKCHLNVSDTRDGSIMPACVPRLESNLVLTNFTKSQYSMSLNDSKFTGIGIGKEDDWIVVVLTTNTPEGSYSTATPTKQESNGFTFGIGLVSYLVIFMYSSFCFFLF.

An N-terminal signal peptide occupies residues 1 to 24; it reads MAIDKLPLLLFLSILLCLNRPVLS. N-linked (GlcNAc...) asparagine glycosylation is found at asparagine 44, asparagine 72, asparagine 99, asparagine 124, and asparagine 135. Serine 174 is lipidated: GPI-anchor amidated serine. Residues 175 to 200 constitute a propeptide, removed in mature form; the sequence is NGFTFGIGLVSYLVIFMYSSFCFFLF.

This sequence belongs to the UPF0277 family.

The protein localises to the cell membrane. This is an uncharacterized protein from Arabidopsis thaliana (Mouse-ear cress).